Reading from the N-terminus, the 74-residue chain is U-scoloptoxin(09)-Sm3a (74 aa).

Residues 1–22 (MNANSIFLCFFIMLIGCTLTHS) form the signal peptide.

Belongs to the scoloptoxin-09 family. In terms of processing, contains 3 disulfide bonds. In terms of tissue distribution, expressed by the venom gland.

It is found in the secreted. The polypeptide is U-scoloptoxin(09)-Sm3a (Scolopendra morsitans (Tanzanian blue ringleg centipede)).